We begin with the raw amino-acid sequence, 348 residues long: Phenylalanine--tRNA ligase alpha subunit (348 aa).

Glutamate 268 is a binding site for Mg(2+).

This sequence belongs to the class-II aminoacyl-tRNA synthetase family. Phe-tRNA synthetase alpha subunit type 1 subfamily. As to quaternary structure, tetramer of two alpha and two beta subunits. The cofactor is Mg(2+).

It localises to the cytoplasm. The catalysed reaction is tRNA(Phe) + L-phenylalanine + ATP = L-phenylalanyl-tRNA(Phe) + AMP + diphosphate + H(+). In Bordetella parapertussis (strain 12822 / ATCC BAA-587 / NCTC 13253), this protein is Phenylalanine--tRNA ligase alpha subunit.